Reading from the N-terminus, the 795-residue chain is Phenylalanine--tRNA ligase beta subunit (795 aa).

The 110-residue stretch at 39–148 (AGTFNGVVVG…LDAPIGTDLR (110 aa)) folds into the tRNA-binding domain. The B5 domain maps to 401–476 (PKVNTVQLRR…RIYGYNSIPN (76 aa)). Positions 454, 460, 463, and 464 each coordinate Mg(2+). Residues 701–794 (SKFPANRRDL…VKQRFNAELR (94 aa)) form the FDX-ACB domain.

Belongs to the phenylalanyl-tRNA synthetase beta subunit family. Type 1 subfamily. As to quaternary structure, tetramer of two alpha and two beta subunits. Requires Mg(2+) as cofactor.

The protein resides in the cytoplasm. It carries out the reaction tRNA(Phe) + L-phenylalanine + ATP = L-phenylalanyl-tRNA(Phe) + AMP + diphosphate + H(+). The chain is Phenylalanine--tRNA ligase beta subunit from Haemophilus influenzae (strain 86-028NP).